Consider the following 305-residue polypeptide: Ribonuclease Z (305 aa).

Zn(2+)-binding residues include His-61, His-63, Asp-65, His-66, His-138, Asp-208, and His-266. The active-site Proton acceptor is the Asp-65.

Belongs to the RNase Z family. As to quaternary structure, homodimer. It depends on Zn(2+) as a cofactor.

It catalyses the reaction Endonucleolytic cleavage of RNA, removing extra 3' nucleotides from tRNA precursor, generating 3' termini of tRNAs. A 3'-hydroxy group is left at the tRNA terminus and a 5'-phosphoryl group is left at the trailer molecule.. In terms of biological role, zinc phosphodiesterase, which displays some tRNA 3'-processing endonuclease activity. Probably involved in tRNA maturation, by removing a 3'-trailer from precursor tRNA. The sequence is that of Ribonuclease Z from Methanosarcina acetivorans (strain ATCC 35395 / DSM 2834 / JCM 12185 / C2A).